The following is a 185-amino-acid chain: Large ribosomal subunit protein bL25 (185 aa).

Belongs to the bacterial ribosomal protein bL25 family. CTC subfamily. Part of the 50S ribosomal subunit; part of the 5S rRNA/L5/L18/L25 subcomplex. Contacts the 5S rRNA. Binds to the 5S rRNA independently of L5 and L18.

Functionally, this is one of the proteins that binds to the 5S RNA in the ribosome where it forms part of the central protuberance. The protein is Large ribosomal subunit protein bL25 of Chlamydia caviae (strain ATCC VR-813 / DSM 19441 / 03DC25 / GPIC) (Chlamydophila caviae).